The following is a 263-amino-acid chain: Undecaprenyl-diphosphatase (263 aa).

Helical transmembrane passes span proline 40–phenylalanine 60, leucine 87–valine 107, alanine 109–phenylalanine 129, phenylalanine 186–tryptophan 206, alanine 219–valine 239, and arginine 243–serine 263.

It belongs to the UppP family.

It localises to the cell inner membrane. It catalyses the reaction di-trans,octa-cis-undecaprenyl diphosphate + H2O = di-trans,octa-cis-undecaprenyl phosphate + phosphate + H(+). Functionally, catalyzes the dephosphorylation of undecaprenyl diphosphate (UPP). Confers resistance to bacitracin. This Syntrophotalea carbinolica (strain DSM 2380 / NBRC 103641 / GraBd1) (Pelobacter carbinolicus) protein is Undecaprenyl-diphosphatase.